We begin with the raw amino-acid sequence, 559 residues long: Mercuric reductase (559 aa).

Residues 1 to 64 enclose the HMA domain; sequence MYLNITGMTC…AVAGLGYKAT (64 aa). Positions 10 and 13 each coordinate a metal cation. Residues Ala108, Gly128, and Thr133 each contribute to the FAD site. Cysteines 134 and 139 form a disulfide. Residues Lys143, Ala209, Asp401, and Val409 each coordinate FAD. Hg(2+)-binding residues include Cys556 and Cys557.

Belongs to the class-I pyridine nucleotide-disulfide oxidoreductase family. Homodimer. FAD serves as cofactor.

The catalysed reaction is Hg + NADP(+) + H(+) = Hg(2+) + NADPH. In terms of biological role, resistance to Hg(2+) in bacteria appears to be governed by a specialized system which includes mercuric reductase. MerA protein is responsible for volatilizing mercury as Hg(0). The polypeptide is Mercuric reductase (merA) (Alcaligenes sp).